The chain runs to 153 residues: Protein Smg homolog (153 aa).

It belongs to the Smg family.

This chain is Protein Smg homolog, found in Neisseria gonorrhoeae (strain ATCC 700825 / FA 1090).